The sequence spans 612 residues: MASITANHPISGKPLISFRPKNPLLQTQTLFNFKPSISKHSNSSFSIPVVRCSIRRIPEYTPSHIPDPNYVRIFDTTLRDGEQSPGATMTTKEKLDVARQSAKLGVDIIEAGFPASSEADLEAVKLIAKEVGNGVYEEEYVPVICGLARCNKKDIDKAWEAVKYAKKPRIHTFIATSEVHMNYKLKMSRDQVVEKARSMVAYARSIGCEDVEFSPEDAGRSDPEFLYHILGEVIKAGATTLNIPDTVGYTVPEEFGQLIAKIKANTPGVEDVIISTHCQNDLGLSTANTLAGACAGARQLEVTINGIGERAGNASLEEVVMALKCRGEQVLGGLYTGINTQHILMSSKMVEGISGLHVQPHKAIVGANAFVHESGIHQDGMLKHKDTYEIISPEDIGLNRANESGIVFGKLSGVMLCKPKMLELGYEIEGKELDDLFWRFKSVAEKKKKITDDDLVALMSDEVFQPQFVWQLQNVQVTCGSLGLSTATVKLIDADGREHISCSVGTGPVDAAYKAVDLIVKVPVTLLEYSMNAVTQGIDAIASTRVLIRGENGHTSTHALTGETVHRTFSGTGADMDIVISSVRAYVGALNKMMSFRKLMAKNNKPESSAVI.

A Pyruvate carboxyltransferase domain is found at 71–344; that stretch reads VRIFDTTLRD…YTGINTQHIL (274 aa). Residues Asp80, His277, and Asn313 each coordinate a divalent metal cation.

This sequence belongs to the alpha-IPM synthase/homocitrate synthase family. LeuA type 1 subfamily. As to quaternary structure, homodimer. It depends on a divalent metal cation as a cofactor.

It carries out the reaction 3-methyl-2-oxobutanoate + acetyl-CoA + H2O = (2S)-2-isopropylmalate + CoA + H(+). It functions in the pathway amino-acid biosynthesis; L-leucine biosynthesis; L-leucine from 3-methyl-2-oxobutanoate: step 1/4. Its function is as follows. Catalyzes the condensation of the acetyl group of acetyl-CoA with 3-methyl-2-oxobutanoate (2-oxoisovalerate) to form 3-carboxy-3-hydroxy-4-methylpentanoate (2-isopropylmalate). In Solanum pennellii (Tomato), this protein is 2-isopropylmalate synthase B (IPMSB).